The sequence spans 209 residues: Probable GTP-binding protein EngB (209 aa).

One can recognise an EngB-type G domain in the interval 12-203 (INLEIIFAGR…RDRLHEMKRD (192 aa)). GTP contacts are provided by residues 20-27 (GRSNVGKS), 45-49 (GVTLR), 62-65 (DMPG), 142-145 (NKMD), and 179-181 (ISA). The Mg(2+) site is built by Ser27 and Thr47.

Belongs to the TRAFAC class TrmE-Era-EngA-EngB-Septin-like GTPase superfamily. EngB GTPase family. Mg(2+) serves as cofactor.

Its function is as follows. Necessary for normal cell division and for the maintenance of normal septation. In Methanosarcina mazei (strain ATCC BAA-159 / DSM 3647 / Goe1 / Go1 / JCM 11833 / OCM 88) (Methanosarcina frisia), this protein is Probable GTP-binding protein EngB.